The sequence spans 496 residues: T-cell activation inhibitor, mitochondrial (496 aa).

The stretch at 404–437 forms a coiled coil; sequence KAQQARENMKRKEELKVIENELIQASTKKFSLEK.

The protein resides in the mitochondrion. Its function is as follows. May regulate T-cell apoptosis. The chain is T-cell activation inhibitor, mitochondrial (TCAIM) from Homo sapiens (Human).